The chain runs to 463 residues: Argininosuccinate lyase (463 aa).

Belongs to the lyase 1 family. Argininosuccinate lyase subfamily.

It is found in the cytoplasm. The enzyme catalyses 2-(N(omega)-L-arginino)succinate = fumarate + L-arginine. It functions in the pathway amino-acid biosynthesis; L-arginine biosynthesis; L-arginine from L-ornithine and carbamoyl phosphate: step 3/3. The protein is Argininosuccinate lyase of Prochlorococcus marinus (strain NATL2A).